We begin with the raw amino-acid sequence, 758 residues long: UPF0313 protein CV_1738 (758 aa).

The 266-residue stretch at 377–642 (AWEMIKYSVN…VDVVRDGYRR (266 aa)) folds into the Radical SAM core domain. [4Fe-4S] cluster-binding residues include Cys391, Cys395, and Cys398. Residues 698-758 (GAPMNRGKSP…KPGGKTSRSR (61 aa)) are disordered. Positions 727 to 737 (RGQGGQGGRPG) are enriched in gly residues.

This sequence belongs to the UPF0313 family. Requires [4Fe-4S] cluster as cofactor.

In Chromobacterium violaceum (strain ATCC 12472 / DSM 30191 / JCM 1249 / CCUG 213 / NBRC 12614 / NCIMB 9131 / NCTC 9757 / MK), this protein is UPF0313 protein CV_1738.